We begin with the raw amino-acid sequence, 160 residues long: Sec-independent protein translocase protein TatB (160 aa).

Residues 1–21 (MFGMGFFEILVVLVVAIIFLG) traverse the membrane as a helical segment. Positions 118–160 (HLNEEVSNEEALNKEVSSDESPKEVQLATDNNTKEHDKEKEHV) are disordered. Composition is skewed to basic and acidic residues over residues 128 to 140 (ALNK…ESPK) and 149 to 160 (NTKEHDKEKEHV).

It belongs to the TatB family. As to quaternary structure, the Tat system comprises two distinct complexes: a TatABC complex, containing multiple copies of TatA, TatB and TatC subunits, and a separate TatA complex, containing only TatA subunits. Substrates initially bind to the TatABC complex, which probably triggers association of the separate TatA complex to form the active translocon.

The protein resides in the cell inner membrane. Part of the twin-arginine translocation (Tat) system that transports large folded proteins containing a characteristic twin-arginine motif in their signal peptide across membranes. Together with TatC, TatB is part of a receptor directly interacting with Tat signal peptides. TatB may form an oligomeric binding site that transiently accommodates folded Tat precursor proteins before their translocation. The protein is Sec-independent protein translocase protein TatB of Helicobacter pylori (strain HPAG1).